A 440-amino-acid chain; its full sequence is Cytochrome b (440 aa).

The helical transmembrane segment at 46–66 threads the bilayer; it reads IWGIVLAFCLVLQIATGIVLV. Residues His97 and His111 each contribute to the heme b site. 9 helical membrane passes run 100 to 120, 129 to 149, 156 to 176, 194 to 214, 253 to 273, 296 to 315, 330 to 350, 365 to 385, and 394 to 414; these read GASL…YYGS, WIVG…GYVL, FWGA…GEAI, FFSL…VHIW, LFAL…MPNY, WYFL…VWVV, FFGV…PWLD, WWFW…AMPA, and LAGS…LGII. Heme b-binding residues include His198 and His212.

This sequence belongs to the cytochrome b family. In terms of assembly, the main subunits of complex b-c1 are: cytochrome b, cytochrome c1 and the Rieske protein. It depends on heme b as a cofactor.

Its subcellular location is the cell membrane. Its function is as follows. Component of the ubiquinol-cytochrome c reductase complex (complex III or cytochrome b-c1 complex), which is a respiratory chain that generates an electrochemical potential coupled to ATP synthesis. This is Cytochrome b (petB) from Paracoccus denitrificans.